Consider the following 141-residue polypeptide: Large ribosomal subunit protein uL11 (141 aa).

This sequence belongs to the universal ribosomal protein uL11 family. As to quaternary structure, part of the ribosomal stalk of the 50S ribosomal subunit. Interacts with L10 and the large rRNA to form the base of the stalk. L10 forms an elongated spine to which L12 dimers bind in a sequential fashion forming a multimeric L10(L12)X complex. One or more lysine residues are methylated.

Forms part of the ribosomal stalk which helps the ribosome interact with GTP-bound translation factors. The chain is Large ribosomal subunit protein uL11 from Chlamydia muridarum (strain MoPn / Nigg).